Here is a 506-residue protein sequence, read N- to C-terminus: Galactose/methyl galactoside import ATP-binding protein MglA (506 aa).

ABC transporter domains are found at residues 14-249 (LEMR…VGRS) and 259-506 (NKPG…SLHL). 46–53 (GENGAGKS) is a binding site for ATP.

It belongs to the ABC transporter superfamily. Galactose/methyl galactoside importer (TC 3.A.1.2.3) family. In terms of assembly, the complex is composed of one ATP-binding protein (MglA), two transmembrane proteins (MglC) and a solute-binding protein (MglB).

The protein resides in the cell inner membrane. The catalysed reaction is D-galactose(out) + ATP + H2O = D-galactose(in) + ADP + phosphate + H(+). It carries out the reaction methyl beta-D-galactoside(out) + ATP + H2O = methyl beta-D-galactoside(in) + ADP + phosphate + H(+). Its activity is regulated as follows. Stimulated 3-fold by galactose and inhibited by vanadate, N-ethylmaleimide, and 5-methoxyindole-2-carboxylic acid. In terms of biological role, part of the ABC transporter complex MglABC involved in galactose/methyl galactoside import. Responsible for energy coupling to the transport system. The sequence is that of Galactose/methyl galactoside import ATP-binding protein MglA from Salmonella typhimurium (strain LT2 / SGSC1412 / ATCC 700720).